The sequence spans 484 residues: Poly(A) RNA polymerase GLD2 (484 aa).

Phosphoserine occurs at positions 62 and 69. Residues 76-92 carry the Nuclear localization signal motif; it reads KRISDEKAFRLDGKRQR. Ser95 carries the post-translational modification Phosphoserine. Mg(2+) is bound by residues Asp213 and Asp215. In terms of domain architecture, PAP-associated spans 386-440; sequence SLGDLLLGFLKYYATEFDWNTQMISVREAKAIPRPDDMEWRNKYICVEEPFDGTN.

Belongs to the DNA polymerase type-B-like family. GLD2 subfamily. Interacts with CPEB1, CPEB2, CPSF1 and PABPC1. Interacts with QKI isoform QKI7; promoting recruitment to miRNA miR-122 and miR-122 stabilization. The cofactor is Mg(2+). Mn(2+) is required as a cofactor.

It localises to the cytoplasm. It is found in the nucleus. The catalysed reaction is RNA(n) + ATP = RNA(n)-3'-adenine ribonucleotide + diphosphate. In terms of biological role, cytoplasmic poly(A) RNA polymerase that adds successive AMP monomers to the 3'-end of specific RNAs, forming a poly(A) tail. In contrast to the canonical nuclear poly(A) RNA polymerase, it only adds poly(A) to selected cytoplasmic mRNAs. Does not play a role in replication-dependent histone mRNA degradation. Adds a single nucleotide to the 3' end of specific miRNAs, monoadenylation stabilizes and prolongs the activity of some but not all miRNAs. This chain is Poly(A) RNA polymerase GLD2, found in Rattus norvegicus (Rat).